Reading from the N-terminus, the 138-residue chain is Basic phospholipase A2 chain HDP-1P (138 aa).

Positions 1-16 (MRILWIVAVCLIGVEG) are cleaved as a signal peptide. 7 cysteine pairs are disulfide-bonded: Cys-42-Cys-131, Cys-44-Cys-60, Cys-59-Cys-111, Cys-65-Cys-138, Cys-66-Cys-104, Cys-73-Cys-97, and Cys-91-Cys-102. The Ca(2+) site is built by Tyr-43, Gly-45, and Gly-47. The active site involves His-63. A Ca(2+)-binding site is contributed by Asp-64. Residue Asp-105 is part of the active site.

In terms of assembly, heterodimer; non-covalently linked. The toxic basic protein has phospholipase A2 activity (chain HDP-1P) and the non-toxic acidic protein functions as its inhibitor (chain HPD-1I (AC A4VBF0)). Requires Ca(2+) as cofactor. Expressed by the venom gland.

The protein resides in the secreted. It catalyses the reaction a 1,2-diacyl-sn-glycero-3-phosphocholine + H2O = a 1-acyl-sn-glycero-3-phosphocholine + a fatty acid + H(+). Enzymatic activity and neurotoxicity are inhibited by Triton X-100, which has been determined to be located in the center of the hydrophobic channel of the enzyme. Heterodimer: shows the same activities as the monomer, but with a lower potency. Functionally, monomer: snake venom phospholipase A2 (PLA2) that shows presynaptic neurotoxicity, anticoagulant activity and that weakly inhibits ADP-induced platelet aggregation. Inhibits exocytosis in pancreatic beta cells, confirming it can act presynaptically in inhibiting the exocytosis of neurotransmitters in neurons. PLA2 catalyzes the calcium-dependent hydrolysis of the 2-acyl groups in 3-sn-phosphoglycerides. This chain is Basic phospholipase A2 chain HDP-1P, found in Vipera nikolskii (Nikolsky's adder).